Here is a 327-residue protein sequence, read N- to C-terminus: Tetraacyldisaccharide 4'-kinase (327 aa).

52–59 (TLGGAGKT) provides a ligand contact to ATP.

This sequence belongs to the LpxK family.

It carries out the reaction a lipid A disaccharide + ATP = a lipid IVA + ADP + H(+). It functions in the pathway glycolipid biosynthesis; lipid IV(A) biosynthesis; lipid IV(A) from (3R)-3-hydroxytetradecanoyl-[acyl-carrier-protein] and UDP-N-acetyl-alpha-D-glucosamine: step 6/6. Transfers the gamma-phosphate of ATP to the 4'-position of a tetraacyldisaccharide 1-phosphate intermediate (termed DS-1-P) to form tetraacyldisaccharide 1,4'-bis-phosphate (lipid IVA). In Methylorubrum populi (strain ATCC BAA-705 / NCIMB 13946 / BJ001) (Methylobacterium populi), this protein is Tetraacyldisaccharide 4'-kinase.